The primary structure comprises 329 residues: Interleukin-12 subunit beta (329 aa).

The signal sequence occupies residues 1-22 (MHPQQLVIAWLSLVLLAPPLMA). Positions 23-106 (IWELEKNVYV…LSHSFLLIHK (84 aa)) constitute an Ig-like C2-type domain. C50 and C90 are joined by a disulfide. N-linked (GlcNAc...) asparagine glycans are attached at residues N135 and N223. One can recognise a Fibronectin type-III domain in the interval 238 to 329 (PPKNLQLKPL…WSNWASVSCS (92 aa)).

Belongs to the IL-12B family. As to quaternary structure, heterodimer with IL12A; disulfide-linked. The heterodimer is known as interleukin IL-12. Heterodimer with IL23A; disulfide-linked. The heterodimer is known as interleukin IL-23. Also secreted as a monomer. Interacts with NBR1; this interaction promotes IL-12 secretion.

It is found in the secreted. Its function is as follows. Cytokine that can act as a growth factor for activated T and NK cells, enhance the lytic activity of NK/lymphokine-activated killer cells, and stimulate the production of IFN-gamma by resting PBMC. Functionally, associates with IL23A to form the IL-23 interleukin, a heterodimeric cytokine which functions in innate and adaptive immunity. IL-23 may constitute with IL-17 an acute response to infection in peripheral tissues. IL-23 binds to a heterodimeric receptor complex composed of IL12RB1 and IL23R, activates the Jak-Stat signaling cascade, stimulates memory rather than naive T-cells and promotes production of pro-inflammatory cytokines. IL-23 induces autoimmune inflammation and thus may be responsible for autoimmune inflammatory diseases and may be important for tumorigenesis. This is Interleukin-12 subunit beta (IL12B) from Felis catus (Cat).